Consider the following 555-residue polypeptide: HERV-H_2q24.1 provirus ancestral Env polyprotein (555 aa).

Positions 1 to 35 (MILAGRAPSNTSTLMKFYSLLLYSLLFSFPFLYHP) are cleaved as a signal peptide. Over 36 to 515 (LPLPSYLHHT…WALSNWMSWV (480 aa)) the chain is Extracellular. N47 carries N-linked (GlcNAc...) asparagine glycosylation. The short motif at 64–67 (CWLC) is the CXXC element. Residues N222, N265, N283, N352, and N370 are each glycosylated (N-linked (GlcNAc...) asparagine). The segment at 388–408 (VIPLIPLMVGLGLSASTIALS) is fusion peptide. The N-linked (GlcNAc...) asparagine glycan is linked to N475. The chain crosses the membrane as a helical span at residues 516–536 (LPILSPLIPIFLLLLFGPCIF). The Cytoplasmic portion of the chain corresponds to 537-555 (HLVSQFIQNRIQAITNHSI).

The protein belongs to the gamma type-C retroviral envelope protein family. HERV class-I H env subfamily. The surface (SU) and transmembrane (TM) proteins form a heterodimer. SU and TM are attached by noncovalent interactions or by a labile interchain disulfide bond. Specific enzymatic cleavages in vivo yield the mature SU and TM proteins. In terms of tissue distribution, low expression in testis.

The protein resides in the virion. It is found in the cell membrane. Retroviral envelope proteins mediate receptor recognition and membrane fusion during early infection. Endogenous envelope proteins may have kept, lost or modified their original function during evolution. This endogenous envelope protein has lost its original fusogenic properties. Functionally, SU mediates receptor recognition. In terms of biological role, TM anchors the envelope heterodimer to the viral membrane through one transmembrane domain. The other hydrophobic domain, called fusion peptide, mediates fusion of the viral membrane with the target cell membrane. The sequence is that of HERV-H_2q24.1 provirus ancestral Env polyprotein from Homo sapiens (Human).